The primary structure comprises 232 residues: C4-dicarboxylate TRAP transporter small permease protein DctQ (232 aa).

4 helical membrane-spanning segments follow: residues 30–50 (EFLIAFFMGAMTLLTFANVIM), 58–78 (ILWALEGTVFMFAWMVLVGAS), 103–123 (LYALVAVACCLAFSILLLIGS), and 167–187 (FIPYAALPIGMALLTFRFLQI).

The protein belongs to the TRAP transporter small permease family. As to quaternary structure, the complex comprises the extracytoplasmic solute receptor protein DctP, and the two transmembrane proteins DctQ and DctM.

The protein resides in the cell inner membrane. Part of the tripartite ATP-independent periplasmic (TRAP) transport system DctPQM involved in C4-dicarboxylates uptake. The sequence is that of C4-dicarboxylate TRAP transporter small permease protein DctQ from Vibrio cholerae serotype O1 (strain ATCC 39315 / El Tor Inaba N16961).